The sequence spans 99 residues: Antitoxin VapB47 (99 aa).

This sequence belongs to the phD/YefM antitoxin family.

Its function is as follows. Antitoxin component of a type II toxin-antitoxin (TA) system. This Mycobacterium tuberculosis (strain CDC 1551 / Oshkosh) protein is Antitoxin VapB47 (vapB47).